A 408-amino-acid polypeptide reads, in one-letter code: Succinylornithine transaminase (408 aa).

Lys-252 carries the N6-(pyridoxal phosphate)lysine modification.

Belongs to the class-III pyridoxal-phosphate-dependent aminotransferase family. AstC subfamily. It depends on pyridoxal 5'-phosphate as a cofactor.

It carries out the reaction N(2)-succinyl-L-ornithine + 2-oxoglutarate = N-succinyl-L-glutamate 5-semialdehyde + L-glutamate. The protein operates within amino-acid degradation; L-arginine degradation via AST pathway; L-glutamate and succinate from L-arginine: step 3/5. Functionally, catalyzes the transamination of N(2)-succinylornithine and alpha-ketoglutarate into N(2)-succinylglutamate semialdehyde and glutamate. Can also act as an acetylornithine aminotransferase. This chain is Succinylornithine transaminase, found in Salmonella typhi.